Reading from the N-terminus, the 539-residue chain is O-phosphoserine--tRNA(Cys) ligase (539 aa).

Substrate is bound by residues His-188 to Thr-190, Ser-233 to Ser-235, Tyr-275 to Tyr-276, and Asn-327.

The protein belongs to the class-II aminoacyl-tRNA synthetase family. O-phosphoseryl-tRNA(Cys) synthetase subfamily. Homotetramer. Interacts with SepCysS.

The catalysed reaction is tRNA(Cys) + O-phospho-L-serine + ATP = O-phospho-L-seryl-tRNA(Cys) + AMP + diphosphate. Functionally, catalyzes the attachment of O-phosphoserine (Sep) to tRNA(Cys). The protein is O-phosphoserine--tRNA(Cys) ligase of Methanosarcina barkeri (strain Fusaro / DSM 804).